Reading from the N-terminus, the 85-residue chain is Cell division topological specificity factor (85 aa).

The protein belongs to the MinE family.

Its function is as follows. Prevents the cell division inhibition by proteins MinC and MinD at internal division sites while permitting inhibition at polar sites. This ensures cell division at the proper site by restricting the formation of a division septum at the midpoint of the long axis of the cell. The chain is Cell division topological specificity factor from Cellvibrio japonicus (strain Ueda107) (Pseudomonas fluorescens subsp. cellulosa).